A 426-amino-acid polypeptide reads, in one-letter code: Histidine--tRNA ligase (426 aa).

Belongs to the class-II aminoacyl-tRNA synthetase family. Homodimer.

The protein localises to the cytoplasm. It carries out the reaction tRNA(His) + L-histidine + ATP = L-histidyl-tRNA(His) + AMP + diphosphate + H(+). This chain is Histidine--tRNA ligase, found in Streptococcus pyogenes serotype M18 (strain MGAS8232).